Reading from the N-terminus, the 475-residue chain is Protein ABCI7, chloroplastic (475 aa).

Residues 1 to 36 (MAAATVLGRLSLIPNLSSKPKLKSNRRTTSTSVSVR) constitute a chloroplast transit peptide.

As to quaternary structure, interacts with NAP7.

It localises to the plastid. It is found in the chloroplast. The polypeptide is Protein ABCI7, chloroplastic (ABCI7) (Arabidopsis thaliana (Mouse-ear cress)).